Here is a 906-residue protein sequence, read N- to C-terminus: Glutamate receptor 1 (906 aa).

The first 18 residues, 1-18, serve as a signal peptide directing secretion; that stretch reads MQHIFAFFCTGFLGAVVG. Over 19–536 the chain is Extracellular; it reads ANFPNNIQIG…GVFSFLDPLA (518 aa). N-linked (GlcNAc...) asparagine glycosylation is found at Asn63, Asn249, Asn257, Asn363, Asn401, and Asn406. Cysteines 75 and 323 form a disulfide. The L-glutamate site is built by Pro492, Thr494, and Arg499. A helical membrane pass occupies residues 537–557; that stretch reads YEIWMCIVFAYIGVSVVLFLV. Topologically, residues 558–584 are cytoplasmic; that stretch reads SRFSPYEWHSEEFEEGRDQTTSDQSNE. Positions 585–600 form an intramembrane region, helical; Pore-forming; the sequence is FGIFNSLWFSLGAFMQ. The stretch at 601–603 is an intramembrane region; that stretch reads QGC. The S-palmitoyl cysteine moiety is linked to residue Cys603. Residues 604–609 lie on the Cytoplasmic side of the membrane; that stretch reads DISPRS. Residues 610–630 traverse the membrane as a helical segment; sequence LSGRIVGGVWWFFTLIIISSY. Residues 631 to 805 are Extracellular-facing; sequence TANLAAFLTV…DKTSALSLSN (175 aa). Ser645 is subject to Phosphoserine. The L-glutamate site is built by Ser668 and Thr669. Ser710 is subject to Phosphoserine. Glu719 is an L-glutamate binding site. Residues Cys732 and Cys787 are joined by a disulfide bond. A helical membrane pass occupies residues 806 to 826; sequence VAGVFYILIGGLGLAMLVALI. The Cytoplasmic segment spans residues 827–906; the sequence is EFCYKSRSES…SGMPLGATGL (80 aa). The S-palmitoyl cysteine moiety is linked to residue Cys829. A phosphoserine mark is found at Ser849 and Ser863. Positions 861 to 880 are disordered; the sequence is RNSGAGASSGGSGENGRVVS. Positions 903 to 906 match the PDZ-binding motif; that stretch reads ATGL.

It belongs to the glutamate-gated ion channel (TC 1.A.10.1) family. GRIA1 subfamily. In terms of assembly, homotetramer or heterotetramer of pore-forming glutamate receptor subunits; heteromeric assembly can be the result of both receptor subtype and flip or flop form and according the composition, one partner can be dominant with respect to the fast desensitizing current component, whereas the other can determine the steady-state component. Tetramers may be formed by the dimerization of dimers. Found in a complex with GRIA2, GRIA3, GRIA4, CNIH2, CNIH3, CACNG2, CACNG3, CACNG4, CACNG5, CACNG7 and CACNG8. Interacts with HIP1 and RASGRF2. Interacts with SYNDIG1 and GRIA2. Interacts with DLG1 (via C-terminus). Interacts with LRFN1. Interacts with PRKG2. Interacts with CNIH2 and CACNG2. Interacts with CACNG5; this interaction modulates the gating. Interacts (via C-terminus) with PDLIM4 (via LIM domain); this interaction as well as the interaction of PDLIM4 with alpha-actinin is required for their colocalization in early endosomes. Interacts with SNX27 (via PDZ domain); the interaction is required for recycling to the plasma membrane when endocytosed and prevent degradation in lysosomes. Interacts (via PDZ-binding motif) with SHANK3 (via PDZ domain). Interacts with CACNG3; associates GRIA1 with the adapter protein complex 4 (AP-4) to target GRIA1 to the somatodendritic compartment of neurons. Interacts with CACNG2; this interaction mediates traffick to the plasma membrane and modulation of desensitization. Interacts with CNIH2 and CNIH3; this interaction promotes expression at the plasma membrane and extensively modulates their gating properties by slowing deactivation and desensitization kinetics. Found in a complex with GRIA2, GRIA3, GRIA4, DLG4, CACNG8 and CNIH2. In terms of processing, palmitoylated. Depalmitoylated by CPT1C and upon L-glutamate stimulation. ZDHHC3/GODZ specifically palmitoylates Cys-603, which leads to Golgi retention and decreased cell surface expression. In contrast, Cys-829 palmitoylation does not affect cell surface expression but regulates stimulation-dependent endocytosis. Post-translationally, phosphorylated at Ser-645. Phosphorylated at Ser-710 by PKC. Phosphorylated at Ser-849 by PKC, PKA and CAMK2. Phosphorylated at Ser-863 by PKC, PKA and PRKG2. Phosphorylation of Ser-863 is reduced by induction of long-term depression and increased by induction of long-term potentiation. As to expression, widely expressed in brain.

It localises to the cell membrane. The protein resides in the endoplasmic reticulum membrane. It is found in the postsynaptic cell membrane. The protein localises to the postsynaptic density membrane. Its subcellular location is the cell projection. It localises to the dendrite. The protein resides in the dendritic spine. It is found in the early endosome membrane. The protein localises to the recycling endosome membrane. Its subcellular location is the presynapse. It localises to the synapse. The catalysed reaction is Ca(2+)(in) = Ca(2+)(out). The enzyme catalyses Na(+)(in) = Na(+)(out). It carries out the reaction Mg(2+)(in) = Mg(2+)(out). It catalyses the reaction Li(+)(in) = Li(+)(out). The catalysed reaction is K(+)(in) = K(+)(out). The enzyme catalyses Sr(2+)(in) = Sr(2+)(out). Functionally, ionotropic glutamate receptor that functions as a ligand-gated cation channel, gated by L-glutamate and glutamatergic agonists such as alpha-amino-3-hydroxy-5-methyl-4-isoxazolepropionic acid (AMPA), quisqualic acid, and kainic acid. L-glutamate acts as an excitatory neurotransmitter at many synapses in the central nervous system. Binding of the excitatory neurotransmitter L-glutamate induces a conformation change, leading to the opening of the cation channel, and thereby converts the chemical signal to an electrical impulse upon entry of monovalent and divalent cations such as sodium and calcium. The receptor then desensitizes rapidly and enters in a transient inactive state, characterized by the presence of bound agonist. In the presence of CACNG2 or CACNG4 or CACNG7 or CACNG8, shows resensitization which is characterized by a delayed accumulation of current flux upon continued application of L-glutamate. Resensitization is blocked by CNIH2 through interaction with CACNG8 in the CACNG8-containing AMPA receptors complex. Calcium (Ca(2+)) permeability depends on subunits composition and, heteromeric channels containing edited GRIA2 subunit are calcium-impermeable. Also permeable to other divalents cations such as strontium(2+) and magnesium(2+) and monovalent cations such as potassium(1+) and lithium(1+). The sequence is that of Glutamate receptor 1 from Homo sapiens (Human).